The following is a 136-amino-acid chain: Ubiquinol-cytochrome-c reductase complex assembly factor 2 (136 aa).

The N-terminal 13 residues, 1–13 (MAALRYRRFLKLC), are a transit peptide targeting the mitochondrion.

As to quaternary structure, interacts with UQCC1.

The protein resides in the mitochondrion matrix. The protein localises to the mitochondrion nucleoid. It is found in the mitochondrion. Its subcellular location is the mitochondrion intermembrane space. It localises to the mitochondrion inner membrane. Required for the assembly of the ubiquinol-cytochrome c reductase complex (mitochondrial respiratory chain complex III or cytochrome b-c1 complex). Plays a role in the modulation of respiratory chain activities such as oxygen consumption and ATP production and via its modulation of the respiratory chain activity can regulate skeletal muscle differentiation and insulin secretion by pancreatic beta-cells. Involved in cytochrome b translation and/or stability. In Rattus norvegicus (Rat), this protein is Ubiquinol-cytochrome-c reductase complex assembly factor 2 (Uqcc2).